The following is a 77-amino-acid chain: Small ribosomal subunit protein uS17 (77 aa).

This sequence belongs to the universal ribosomal protein uS17 family. As to quaternary structure, part of the 30S ribosomal subunit.

One of the primary rRNA binding proteins, it binds specifically to the 5'-end of 16S ribosomal RNA. This is Small ribosomal subunit protein uS17 from Rickettsia prowazekii (strain Madrid E).